The following is a 78-amino-acid chain: Major outer membrane lipoprotein Lpp (78 aa).

Residues 1-20 form the signal peptide; sequence MKATKLVLGAVILGSTLLAG. A lipid anchor (N-palmitoyl cysteine) is attached at cysteine 21. Cysteine 21 carries S-diacylglycerol cysteine lipidation. Repeats lie at residues 24–34 and 38–48; these read NAKIDQLSSDV and NAKVDQLSNDV. Residues 27–75 are a coiled coil; it reads IDQLSSDVQTLNAKVDQLSNDVNAMRSDVQAAKDDAARANQRLDNMATK. At lysine 78 the chain carries N6-murein peptidoglycan lysine.

The protein belongs to the Lpp family. In terms of assembly, homotrimer.

Its subcellular location is the cell outer membrane. The protein resides in the secreted. The protein localises to the cell wall. In terms of biological role, a highly abundant outer membrane lipoprotein that controls the distance between the inner and outer membranes. The only protein known to be covalently linked to the peptidoglycan network (PGN). Also non-covalently binds the PGN. The link between the cell outer membrane and PGN contributes to maintenance of the structural and functional integrity of the cell envelope, and maintains the correct distance between the PGN and the outer membrane. The chain is Major outer membrane lipoprotein Lpp from Shigella flexneri.